Reading from the N-terminus, the 144-residue chain is MESPLGSDLARLVRVWRALIDHRLKPLELTQTHWITLHNICQLPPEQSQIQLAKAIGIEQPSLVRTLDQLEEKGLITRHTCANDRRAKRIKLTESAEPIIKEVNNVIDSTRNEILNGISQEEIQLLSNMIAKLEKNILELYNKS.

One can recognise an HTH marR-type domain in the interval 2 to 135 (ESPLGSDLAR…LSNMIAKLEK (134 aa)). Residues 49–72 (QIQLAKAIGIEQPSLVRTLDQLEE) constitute a DNA-binding region (H-T-H motif).

The protein belongs to the SlyA family. In terms of assembly, homodimer.

Its function is as follows. Transcription regulator that can specifically activate or repress expression of target genes. The protein is Transcriptional regulator SlyA of Sodalis glossinidius (strain morsitans).